We begin with the raw amino-acid sequence, 561 residues long: Lengsin (561 aa).

Disordered regions lie at residues 1–78 (MNDE…WHNA) and 91–112 (SLPS…TRDN). Over residues 26-37 (NKLKRTRRKVTK) the composition is skewed to basic residues. Over residues 50-63 (MANSREMSRNQTAD) the composition is skewed to polar residues. In terms of domain architecture, GS beta-grasp spans 135–229 (NHLQFVRFEA…VICDTFTVTG (95 aa)). Residues 236-561 (PRYIAKRQLR…EGNKFLEYFI (326 aa)) form the GS catalytic domain.

It belongs to the glutamine synthetase family. In terms of assembly, dodecamer. Interacts with BFSP2 and VIM. Expressed in lens.

Its function is as follows. May act as a component of the cytoskeleton or as a chaperone for the reorganization of intermediate filament proteins during terminal differentiation in the lens. Does not seem to have enzymatic activity. The sequence is that of Lengsin (Lgsn) from Rattus norvegicus (Rat).